Here is a 266-residue protein sequence, read N- to C-terminus: Ribosomal RNA small subunit methyltransferase A (266 aa).

Positions 11, 13, 37, 57, 85, and 104 each coordinate S-adenosyl-L-methionine.

The protein belongs to the class I-like SAM-binding methyltransferase superfamily. rRNA adenine N(6)-methyltransferase family. RsmA subfamily.

The protein resides in the cytoplasm. It catalyses the reaction adenosine(1518)/adenosine(1519) in 16S rRNA + 4 S-adenosyl-L-methionine = N(6)-dimethyladenosine(1518)/N(6)-dimethyladenosine(1519) in 16S rRNA + 4 S-adenosyl-L-homocysteine + 4 H(+). Its function is as follows. Specifically dimethylates two adjacent adenosines (A1518 and A1519) in the loop of a conserved hairpin near the 3'-end of 16S rRNA in the 30S particle. May play a critical role in biogenesis of 30S subunits. In Campylobacter jejuni (strain RM1221), this protein is Ribosomal RNA small subunit methyltransferase A.